The primary structure comprises 155 residues: MRLLIWVLFVTLVTFVSNTTATSTFTDPQVTSGDIEALTHLLDVESNADAKRFLRTESKNDLKSDADTNGIDIEDEERGFIPSSITNAFSKMKTGWSNFKSNQFEKAFQRMNQKGETPTTLAKRLDIGKTAEKRFEKTYEKYTAWWINHHTNAGT.

Residues Met-1–Ala-21 form the signal peptide. The RxLR-dEER signature appears at Arg-52 to Arg-78. The segment at Glu-105–Thr-155 is RABA-binding domain.

Belongs to the RxLR effector family. Interacts with Arabidopsis thaliana RABA GTPases including RABA1a, RABA1b, RABA1c, RABA1d, RABA1f, RABA2a, RABA2c, RABA2d, RABA4a, RABA4b and RABA4c.

The protein resides in the secreted. Its subcellular location is the host cell membrane. It localises to the host endomembrane system. Its function is as follows. Effector protein that contributes to pathogen virulence. Targets members of the RABA GTPases subfamily to inhibit vesicular secretion, leading to an accumulation of secretory proteins in the endoplasmic reticulum. This Phytophthora brassicae protein is RxLR effector protein 24.